The following is a 129-amino-acid chain: Small ribosomal subunit protein uS11 (129 aa).

This sequence belongs to the universal ribosomal protein uS11 family. In terms of assembly, part of the 30S ribosomal subunit. Interacts with proteins S7 and S18. Binds to IF-3.

In terms of biological role, located on the platform of the 30S subunit, it bridges several disparate RNA helices of the 16S rRNA. Forms part of the Shine-Dalgarno cleft in the 70S ribosome. The chain is Small ribosomal subunit protein uS11 from Nitratidesulfovibrio vulgaris (strain ATCC 29579 / DSM 644 / CCUG 34227 / NCIMB 8303 / VKM B-1760 / Hildenborough) (Desulfovibrio vulgaris).